Reading from the N-terminus, the 333-residue chain is Nucleoid-associated protein APJL_0454 (333 aa).

Belongs to the YejK family.

The protein resides in the cytoplasm. It localises to the nucleoid. The polypeptide is Nucleoid-associated protein APJL_0454 (Actinobacillus pleuropneumoniae serotype 3 (strain JL03)).